A 224-amino-acid chain; its full sequence is Cytidylate kinase (224 aa).

10–18 serves as a coordination point for ATP; it reads GPSGVGKGT.

The protein belongs to the cytidylate kinase family. Type 1 subfamily.

It is found in the cytoplasm. It carries out the reaction CMP + ATP = CDP + ADP. The catalysed reaction is dCMP + ATP = dCDP + ADP. This is Cytidylate kinase from Haemophilus ducreyi (strain 35000HP / ATCC 700724).